Reading from the N-terminus, the 842-residue chain is Protein translocase subunit SecA (842 aa).

ATP-binding positions include glutamine 85, 103 to 107, and aspartate 493; that span reads GEGKT. Zn(2+)-binding residues include cysteine 825, cysteine 827, cysteine 836, and histidine 837.

Belongs to the SecA family. Monomer and homodimer. Part of the essential Sec protein translocation apparatus which comprises SecA, SecYEG and auxiliary proteins SecDF. Other proteins may also be involved. Requires Zn(2+) as cofactor.

It is found in the cell membrane. It localises to the cytoplasm. The catalysed reaction is ATP + H2O + cellular proteinSide 1 = ADP + phosphate + cellular proteinSide 2.. In terms of biological role, part of the Sec protein translocase complex. Interacts with the SecYEG preprotein conducting channel. Has a central role in coupling the hydrolysis of ATP to the transfer of proteins into and across the cell membrane, serving as an ATP-driven molecular motor driving the stepwise translocation of polypeptide chains across the membrane. In Streptococcus equi subsp. equi (strain 4047), this protein is Protein translocase subunit SecA.